Reading from the N-terminus, the 105-residue chain is Flagellar transcriptional regulator FlhD (105 aa).

The protein belongs to the FlhD family. In terms of assembly, homodimer; disulfide-linked. Forms a heterohexamer composed of two FlhC and four FlhD subunits. Each FlhC binds a FlhD dimer, forming a heterotrimer, and a hexamer assembles by dimerization of two heterotrimers.

The protein resides in the cytoplasm. In terms of biological role, functions in complex with FlhC as a master transcriptional regulator that regulates transcription of several flagellar and non-flagellar operons by binding to their promoter region. Activates expression of class 2 flagellar genes, including fliA, which is a flagellum-specific sigma factor that turns on the class 3 genes. Also regulates genes whose products function in a variety of physiological pathways. This chain is Flagellar transcriptional regulator FlhD, found in Ralstonia pickettii (strain 12J).